Consider the following 209-residue polypeptide: Putative AgrB-like protein (209 aa).

Helical transmembrane passes span 49-71, 82-102, 105-125, 149-169, and 173-193; these read ILFL…AAFG, AKNS…GAYL, YLLF…LLLF, QAVL…DELI, and ISLS…KVLG.

This sequence belongs to the AgrB family.

Its subcellular location is the cell membrane. Functionally, may be involved in the proteolytic processing of a quorum sensing system signal molecule precursor. This Clostridium acetobutylicum (strain ATCC 824 / DSM 792 / JCM 1419 / IAM 19013 / LMG 5710 / NBRC 13948 / NRRL B-527 / VKM B-1787 / 2291 / W) protein is Putative AgrB-like protein.